We begin with the raw amino-acid sequence, 409 residues long: Broad specificity amino-acid racemase (409 aa).

Positions 1 to 24 are cleaved as a signal peptide; it reads MPFRRTLLAASLVLLITGQAPLYA. Residues Cys71 and Cys97 are joined by a disulfide bond. Lys75 functions as the Proton acceptor in the catalytic mechanism. An N6-(pyridoxal phosphate)lysine modification is found at Lys75. Residue Arg174 participates in substrate binding. The active-site Proton acceptor is the Tyr301. Position 349 (Met349) interacts with substrate.

The protein belongs to the alanine racemase family. Bsr subfamily. As to quaternary structure, monomer. Forms a head-to-tail homodimer in the structure. The cofactor is pyridoxal 5'-phosphate.

Its subcellular location is the periplasm. It catalyses the reaction an L-alpha-amino acid = a D-alpha-amino acid. It carries out the reaction L-lysine = D-lysine. The enzyme catalyses L-arginine = D-arginine. The catalysed reaction is L-alanine = D-alanine. With respect to regulation, activity is enhanced by Co(2+), Mn(2+) and Sr(2+), and decreased by Cu(2+). Its function is as follows. Amino-acid racemase that catalyzes the interconversion of L-lysine and D-lysine, and L-arginine and D-arginine. To a lesser extent, is also able to interconvert alanine and isoleucine enantiomers. This chain is Broad specificity amino-acid racemase, found in Pseudomonas putida (Arthrobacter siderocapsulatus).